A 364-amino-acid polypeptide reads, in one-letter code: Mitoferrin-2 (364 aa).

Positions 1 to 17 are enriched in gly residues; that stretch reads MELEGRGAGGVAGGPAA. Disordered regions lie at residues 1–28 and 40–60; these read MELEGRGAGGVAGGPAAGPGRSPGESAL and GAGGGEAGACRPPVRQDPDSG. Residues 18–27 are compositionally biased toward low complexity; the sequence is GPGRSPGESA. Solcar repeat units follow at residues 70–158, 168–252, and 259–352; these read ATVT…LKKT, NSHI…LQEH, and YNPS…FKYL. The next 6 membrane-spanning stretches (helical) occupy residues 72 to 91, 133 to 152, 170 to 189, 227 to 246, 261 to 280, and 327 to 346; these read VTTHMVAGAVAGILEHCVMY, GLNVTATGAGPAHALYFACY, HIANGAAGCVATLLHDAAMN, SYTTQLTMNVPFQAIHFMTY, PSSHVLSGACAGAVAAAATT, and GVQARVIYQIPSTAIAWSVY.

It belongs to the mitochondrial carrier (TC 2.A.29) family. In terms of tissue distribution, ubiquitous. Expressed in placenta, lung, kidney, pancreas, liver, brain, skeletal muscle and heart.

The protein resides in the mitochondrion inner membrane. The catalysed reaction is Fe(2+)(in) = Fe(2+)(out). Mitochondrial iron transporter that mediates iron uptake. Probably required for heme synthesis of hemoproteins and Fe-S cluster assembly in non-erythroid cells. In Homo sapiens (Human), this protein is Mitoferrin-2 (SLC25A28).